The following is a 130-amino-acid chain: Gloverin (130 aa).

In terms of tissue distribution, hemolymph.

Its subcellular location is the secreted. In terms of biological role, antibacterial protein active against Gram-negative bacteria. The chain is Gloverin from Hyalophora cecropia (Cecropia moth).